We begin with the raw amino-acid sequence, 322 residues long: 3-hydroxyacyl-CoA dehydrogenase FVEG_12628 (322 aa).

A helical membrane pass occupies residues Ile5–Leu25. Glu151 (for hydroxyacyl-coenzyme A dehydrogenase activity) is an active-site residue.

It belongs to the 3-hydroxyacyl-CoA dehydrogenase family.

Its subcellular location is the membrane. Its function is as follows. 3-hydroxyacyl-CoA dehydrogenase; part of the Fusarium detoxification of benzoxazolinone cluster 2 (FDB2) involved in the degradation of benzoxazolinones produced by the host plant. Maize, wheat, and rye produce the 2 benzoxazinone phytoanticipins 2,4-dihy-droxy-7-methoxy-1,4-benzoxazin-3-one (DIMBOA) and 2,4-dihydroxy-1,4-benzoxazin-3-one (DIBOA) that, due to their inherent instability once released, spontaneously degrade to the more stable corresponding benzoxazolinones, 6-methoxy-2-benzoxazolinone (MBOA) and 2-benzoxazolinone (BOA), respectively. The first step in the detoxification of benzoxazolinones involves the hydrolysis of the cyclic ester bond of benzoxazolinones by the FDB1 cluster gamma-lactamase MBL1 to aminophenols. MBL1 is able to convert BOA into 2-aminophenol (2-AP), as well as MBOA into 5-methoxy-2-aminophenol (2-AMP). The FDB2 cluster N-malonyltransferase FDB2/NAT1 then metabolizes aminophenols via N-malonylation to non-toxic malonamic acids. FDB2/NAT1 converts 2-AP into N-(2-hydroxyphenyl) malonamic acid (HPMA) and 2-AMP into N-(2-hydroxy-4-methoxyphenyl) malonamic acid (HMPMA). The duplicated dienlactone hydrolases DLH1 and DLH2 may provide redundant function for hydrolyzing the lactone moiety in the BOA molecule. The roles of the amidases an other enzymes encoded by the 2 FDB clusters have not been identified so far. The sequence is that of 3-hydroxyacyl-CoA dehydrogenase FVEG_12628 from Gibberella moniliformis (strain M3125 / FGSC 7600) (Maize ear and stalk rot fungus).